A 285-amino-acid polypeptide reads, in one-letter code: Proteasome subunit beta (285 aa).

A propeptide spans 1–50 (MTAEHPARLPQAFMTPGSSSFVDFLAAHDPSLLPSSRALPAGSAPPAPHG) (removed in mature form; by autocatalysis). Residue threonine 51 is the Nucleophile of the active site. A disordered region spans residues 266–285 (RTRQARSSRSRHGSLGGDLR).

Belongs to the peptidase T1B family. As to quaternary structure, the 20S proteasome core is composed of 14 alpha and 14 beta subunits that assemble into four stacked heptameric rings, resulting in a barrel-shaped structure. The two inner rings, each composed of seven catalytic beta subunits, are sandwiched by two outer rings, each composed of seven alpha subunits. The catalytic chamber with the active sites is on the inside of the barrel. Has a gated structure, the ends of the cylinder being occluded by the N-termini of the alpha-subunits. Is capped by the proteasome-associated ATPase, ARC.

The protein localises to the cytoplasm. The catalysed reaction is Cleavage of peptide bonds with very broad specificity.. Its pathway is protein degradation; proteasomal Pup-dependent pathway. Its activity is regulated as follows. The formation of the proteasomal ATPase ARC-20S proteasome complex, likely via the docking of the C-termini of ARC into the intersubunit pockets in the alpha-rings, may trigger opening of the gate for substrate entry. Interconversion between the open-gate and close-gate conformations leads to a dynamic regulation of the 20S proteasome proteolysis activity. Its function is as follows. Component of the proteasome core, a large protease complex with broad specificity involved in protein degradation. The chain is Proteasome subunit beta from Sanguibacter keddieii (strain ATCC 51767 / DSM 10542 / NCFB 3025 / ST-74).